A 175-amino-acid chain; its full sequence is Bifunctional protein PyrR (175 aa).

A PRPP-binding motif is present at residues 98–110 (VIIIDDVLYTGRT).

This sequence belongs to the purine/pyrimidine phosphoribosyltransferase family. PyrR subfamily. Homodimer and homohexamer; in equilibrium.

The catalysed reaction is UMP + diphosphate = 5-phospho-alpha-D-ribose 1-diphosphate + uracil. Regulates transcriptional attenuation of the pyrimidine nucleotide (pyr) operon by binding in a uridine-dependent manner to specific sites on pyr mRNA. This disrupts an antiterminator hairpin in the RNA and favors formation of a downstream transcription terminator, leading to a reduced expression of downstream genes. Its function is as follows. Also displays a weak uracil phosphoribosyltransferase activity which is not physiologically significant. The chain is Bifunctional protein PyrR from Staphylococcus aureus (strain bovine RF122 / ET3-1).